We begin with the raw amino-acid sequence, 357 residues long: MSTNPIQPLLDVLYQGKSLNREQTAELFGALIRGEMSEAAMAGMLVALKMRGETIDEISGAADAMRAAAKPFPCPERNNNPLHNGIVDIVGTGGDGFNTINISTTAAFVAAAAGAKVAKHGNRSVSSKSGSSDLLAQFGIDLTMSPETASRCLDALNLCFLFAPHYHGGVKHAVPVRQALKTRTLFNVLGPLINPARPEFMLLGVYSPELVLPIAKVLKALGTKRAMVVHGSGLDEVALHGNTQVAELKDGDIVEYQLTPADLGVPLAQITDLEGGEPAQNALITEAILKGRGTEAHANAVAINAGCALYVCGIADSVKAGTLLALATIQSGKAFELLSQLAKVSGEALVNGQEKGR.

5-phospho-alpha-D-ribose 1-diphosphate-binding positions include G91, 94–95 (GD), T99, 101–104 (NIST), 119–127 (KHGNRSVSS), and S131. G91 provides a ligand contact to anthranilate. Residue S103 coordinates Mg(2+). Anthranilate is bound at residue N122. R177 is an anthranilate binding site. The Mg(2+) site is built by D235 and E236.

Belongs to the anthranilate phosphoribosyltransferase family. As to quaternary structure, homodimer. The cofactor is Mg(2+).

It carries out the reaction N-(5-phospho-beta-D-ribosyl)anthranilate + diphosphate = 5-phospho-alpha-D-ribose 1-diphosphate + anthranilate. Its pathway is amino-acid biosynthesis; L-tryptophan biosynthesis; L-tryptophan from chorismate: step 2/5. Catalyzes the transfer of the phosphoribosyl group of 5-phosphorylribose-1-pyrophosphate (PRPP) to anthranilate to yield N-(5'-phosphoribosyl)-anthranilate (PRA). The polypeptide is Anthranilate phosphoribosyltransferase (Shewanella baltica (strain OS185)).